The chain runs to 416 residues: Phosphoglycerate kinase (416 aa).

Val-23, Asp-24, Phe-25, Asn-26, Gln-38, Arg-39, Ser-62, His-63, Gly-65, Arg-66, Leu-121, Arg-122, His-168, and Arg-169 together coordinate (2R)-3-phosphoglycerate. Residue Gly-212 participates in ADP binding. Position 212 (Gly-212) interacts with CDP. AMP is bound by residues Ala-213 and Lys-214. An ATP-binding site is contributed by Ala-213. Ala-213 serves as a coordination point for Mg(2+). Positions 216 and 217 each coordinate Mg(2+). Residue Asp-217 coordinates CDP. Position 218 (Lys-218) interacts with AMP. Position 218 (Lys-218) interacts with ATP. Gly-236 is a binding site for ADP. Gly-236 lines the CDP pocket. Residues Gly-237 and Gly-311 each coordinate AMP. ATP-binding residues include Gly-237 and Gly-311. CDP contacts are provided by Gly-336 and Phe-341. Phe-341 is an ADP binding site. Glu-342 is an AMP binding site. ATP-binding residues include Glu-342, Asp-373, and Thr-374. Residue Asp-373 participates in Mg(2+) binding.

This sequence belongs to the phosphoglycerate kinase family. As to quaternary structure, monomer. Requires Mg(2+) as cofactor.

The protein resides in the cytoplasm. It localises to the mitochondrion. It catalyses the reaction (2R)-3-phosphoglycerate + ATP = (2R)-3-phospho-glyceroyl phosphate + ADP. Its pathway is carbohydrate degradation; glycolysis; pyruvate from D-glyceraldehyde 3-phosphate: step 2/5. Functionally, catalyzes one of the two ATP producing reactions in the glycolytic pathway via the reversible conversion of 1,3-diphosphoglycerate to 3-phosphoglycerate. Both L- and D- forms of purine and pyrimidine nucleotides can be used as substrates, but the activity is much lower on pyrimidines. Negatively regulates the biosynthesis of acetyl-CoA from pyruvate in the mitochondrion. The chain is Phosphoglycerate kinase (PGK) from Kluyveromyces lactis (strain ATCC 8585 / CBS 2359 / DSM 70799 / NBRC 1267 / NRRL Y-1140 / WM37) (Yeast).